Consider the following 356-residue polypeptide: Ferrochelatase (356 aa).

Residues His-214 and Glu-295 each coordinate Fe cation.

The protein belongs to the ferrochelatase family.

Its subcellular location is the cytoplasm. The catalysed reaction is heme b + 2 H(+) = protoporphyrin IX + Fe(2+). Its pathway is porphyrin-containing compound metabolism; protoheme biosynthesis; protoheme from protoporphyrin-IX: step 1/1. Catalyzes the ferrous insertion into protoporphyrin IX. In Paraburkholderia phymatum (strain DSM 17167 / CIP 108236 / LMG 21445 / STM815) (Burkholderia phymatum), this protein is Ferrochelatase.